The primary structure comprises 875 residues: GATOR2 complex protein MIOS (875 aa).

WD repeat units lie at residues 58 to 100 (SDTP…NSKF), 111 to 155 (KHAR…TPDI), 182 to 221 (GQND…QKMF), 223 to 261 (NTKA…KPVL), 265 to 306 (EQPK…TPIG), and 395 to 437 (RLRA…KQYT). The C4-type zinc finger occupies 735–781 (VSCNFCGKSISYSCSAVPHQGRGFSQYGVSGSPTKSKVTSCPGCRKP). Zn(2+)-binding residues include cysteine 737 and cysteine 740. Phosphoserine occurs at positions 759 and 766. Zn(2+)-binding residues include cysteine 775, cysteine 778, cysteine 788, cysteine 827, cysteine 830, histidine 832, histidine 835, histidine 838, cysteine 849, cysteine 854, and cysteine 858. The RING-type; atypical zinc-finger motif lies at 782-863 (LPRCALCLIN…CTCKCMQLDT (82 aa)).

This sequence belongs to the WD repeat mio family. Component of the GATOR2 subcomplex, composed of MIOS, SEC13, SEH1L, WDR24 and WDR59. The GATOR2 complex interacts with CASTOR1 and CASTOR2; the interaction is negatively regulated by arginine. CASTOR1 and CASTOR2 convey leucine availability via direct interaction with MIOS. The GATOR2 complex interacts with SESN1, SESN2 and SESN3; the interaction is negatively regulated by amino acids. Interacts with SAR1A and SAR1B; the interaction is direct, disrupted by leucine and mediates the interaction of SAR1A or SAR1B with the GATOR2 complex to negatively regulate the TORC1 signaling upon leucine deprivation.

The protein resides in the lysosome membrane. With respect to regulation, the GATOR2 complex is negatively regulated by the upstream amino acid sensors CASTOR1 and SESN2, which sequester the GATOR2 complex in absence of amino acids. In the presence of abundant amino acids, GATOR2 is released from CASTOR1 and SESN2 and activated. Functionally, as a component of the GATOR2 complex, functions as an activator of the amino acid-sensing branch of the mTORC1 signaling pathway. The GATOR2 complex indirectly activates mTORC1 through the inhibition of the GATOR1 subcomplex. GATOR2 probably acts as an E3 ubiquitin-protein ligase toward GATOR1. In the presence of abundant amino acids, the GATOR2 complex mediates ubiquitination of the NPRL2 core component of the GATOR1 complex, leading to GATOR1 inactivation. In the absence of amino acids, GATOR2 is inhibited, activating the GATOR1 complex. Within the GATOR2 complex, MIOS is required to prevent autoubiquitination of WDR24, the catalytic subunit of the complex. The GATOR2 complex is required for brain myelination. The chain is GATOR2 complex protein MIOS from Homo sapiens (Human).